The following is a 298-amino-acid chain: Protease HtpX homolog (298 aa).

The next 2 helical transmembrane spans lie at 5–25 (IFLFILTNILVLTTIGIVLSV) and 45–65 (MALLVFSLVVGFVGSFTSLAI). Histidine 155 contributes to the Zn(2+) binding site. Residue glutamate 156 is part of the active site. A Zn(2+)-binding site is contributed by histidine 159. 2 consecutive transmembrane segments (helical) span residues 170–190 (LLQGIVNTFVVFLSRIAAWIA) and 204–224 (FIAMIIFQIVFSILGSLVVFA). Residue glutamate 230 participates in Zn(2+) binding.

Belongs to the peptidase M48B family. Zn(2+) is required as a cofactor.

Its subcellular location is the cell membrane. The protein is Protease HtpX homolog of Bacillus subtilis (strain 168).